A 92-amino-acid polypeptide reads, in one-letter code: Large ribosomal subunit protein eL43 (92 aa).

Residues C39, C42, C57, and C60 each contribute to the Zn(2+) site. Residues 39–60 (CPVCGFPKLKRASTSIWVCGKC) form a C4-type zinc finger.

Belongs to the eukaryotic ribosomal protein eL43 family. Putative zinc-binding subfamily. As to quaternary structure, part of the 50S ribosomal subunit. The cofactor is Zn(2+).

Functionally, binds to the 23S rRNA. This is Large ribosomal subunit protein eL43 from Methanocaldococcus jannaschii (strain ATCC 43067 / DSM 2661 / JAL-1 / JCM 10045 / NBRC 100440) (Methanococcus jannaschii).